Here is a 657-residue protein sequence, read N- to C-terminus: LIM and SH3 domain protein Lasp (657 aa).

The region spanning 3-63 (KTCARCQKVV…EAHIPKAKAT (61 aa)) is the LIM zinc-binding domain. Nebulin repeat units follow at residues 64–95 (AIAD…KAKG) and 96–130 (KFTQ…KKAA). 6 disordered regions span residues 130 to 151 (AMEK…EYFS), 164 to 223 (PTAS…PIQH), 235 to 257 (YQQL…QLHD), 294 to 318 (LYPT…QQQA), 332 to 415 (NSHH…SAAS), and 460 to 528 (KQHA…PKRI). The segment covering 140-150 (VSDSSNESEYF) has biased composition (polar residues). Composition is skewed to low complexity over residues 172–215 (AATT…QQQT) and 236–254 (QQLQ…QQQQ). A compositionally biased stretch (polar residues) spans 332–341 (NSHHPSGNSV). Positions 342-357 (DQYDQPQQQQHQPQQQ) are enriched in low complexity. Polar residues predominate over residues 358-370 (STNPTLVAAQQQQ). Positions 371-403 (SHHSLLNNNASNGGISHSHHSNINNNGHGSQNQ) are enriched in low complexity. Residues 460 to 475 (KQHASNGHMPNQQQQH) show a composition bias toward polar residues. S505 and S530 each carry phosphoserine. The segment at 548 to 592 (EQAHQQQKHQQYYQQVQMMQQQEHPPQQQQMRQQPSYSSLQEKQS) is disordered. Residues 549–586 (QAHQQQKHQQYYQQVQMMQQQEHPPQQQQMRQQPSYSS) show a composition bias toward low complexity. The 62-residue stretch at 596–657 (TAMRVYRAIY…PANYVEQAVI (62 aa)) folds into the SH3 domain.

Interacts with osk.

This Drosophila melanogaster (Fruit fly) protein is LIM and SH3 domain protein Lasp.